Consider the following 185-residue polypeptide: Large ribosomal subunit protein bL17 (185 aa).

The protein belongs to the bacterial ribosomal protein bL17 family. In terms of assembly, part of the 50S ribosomal subunit. Contacts protein L32.

The sequence is that of Large ribosomal subunit protein bL17 from Rhodococcus erythropolis (strain PR4 / NBRC 100887).